Here is a 482-residue protein sequence, read N- to C-terminus: uncharacterized protein (482 aa).

12 helical membrane-spanning segments follow: residues 40 to 57 (LDWY…LSFL), 83 to 103 (AAVS…VLLV), 109 to 129 (HYYL…TCFV), 140 to 160 (LLLG…ISMT), 170 to 190 (LAYL…IATG), 205 to 225 (WLYI…LFCL), 278 to 298 (VIQF…PSIL), 311 to 331 (YMSV…CLLS), 338 to 358 (GWFI…LLAT), 366 to 386 (VATY…ITWI), 399 to 418 (ALGC…GQVY), and 428 to 448 (GFAL…RFYL).

The protein belongs to the major facilitator superfamily. Allantoate permease family.

It localises to the endoplasmic reticulum. The protein resides in the membrane. This is an uncharacterized protein from Schizosaccharomyces pombe (strain 972 / ATCC 24843) (Fission yeast).